A 216-amino-acid polypeptide reads, in one-letter code: Phosphatidylserine decarboxylase proenzyme (216 aa).

Serine 185 acts as the Schiff-base intermediate with substrate; via pyruvic acid in catalysis. Position 185 is a pyruvic acid (Ser); by autocatalysis (serine 185).

Belongs to the phosphatidylserine decarboxylase family. PSD-A subfamily. In terms of assembly, heterodimer of a large membrane-associated beta subunit and a small pyruvoyl-containing alpha subunit. The cofactor is pyruvate. In terms of processing, is synthesized initially as an inactive proenzyme. Formation of the active enzyme involves a self-maturation process in which the active site pyruvoyl group is generated from an internal serine residue via an autocatalytic post-translational modification. Two non-identical subunits are generated from the proenzyme in this reaction, and the pyruvate is formed at the N-terminus of the alpha chain, which is derived from the carboxyl end of the proenzyme. The post-translation cleavage follows an unusual pathway, termed non-hydrolytic serinolysis, in which the side chain hydroxyl group of the serine supplies its oxygen atom to form the C-terminus of the beta chain, while the remainder of the serine residue undergoes an oxidative deamination to produce ammonia and the pyruvoyl prosthetic group on the alpha chain.

It is found in the cell membrane. It catalyses the reaction a 1,2-diacyl-sn-glycero-3-phospho-L-serine + H(+) = a 1,2-diacyl-sn-glycero-3-phosphoethanolamine + CO2. Its pathway is phospholipid metabolism; phosphatidylethanolamine biosynthesis; phosphatidylethanolamine from CDP-diacylglycerol: step 2/2. Its function is as follows. Catalyzes the formation of phosphatidylethanolamine (PtdEtn) from phosphatidylserine (PtdSer). The protein is Phosphatidylserine decarboxylase proenzyme of Nitrosomonas eutropha (strain DSM 101675 / C91 / Nm57).